We begin with the raw amino-acid sequence, 138 residues long: Cellular retinoic acid-binding protein 2 (138 aa).

A Nuclear localization signal motif is present at residues 21 to 31; sequence KVLGVNVMLRK. K102 is covalently cross-linked (Glycyl lysine isopeptide (Lys-Gly) (interchain with G-Cter in SUMO)). 133-135 lines the all-trans-retinoate pocket; the sequence is RVY.

Belongs to the calycin superfamily. Fatty-acid binding protein (FABP) family. In terms of assembly, interacts with importin alpha, RXR and RARA. Sumoylated in response to retinoic acid binding, sumoylation is critical for dissociation from ER and subsequent nuclear translocation.

Its subcellular location is the cytoplasm. It localises to the endoplasmic reticulum. It is found in the nucleus. Its function is as follows. Transports retinoic acid to the nucleus. Regulates the access of retinoic acid to the nuclear retinoic acid receptors. This chain is Cellular retinoic acid-binding protein 2 (CRABP2), found in Bos taurus (Bovine).